The sequence spans 1132 residues: Serine/threonine-protein kinase spk-1 (1132 aa).

The chain crosses the membrane as a helical span at residues 75 to 95 (GGSLILTDIFPTVLFMFVVLF). Disordered stretches follow at residues 240–388 (NEDQ…DSDD) and 419–481 (NKKA…KRGG). Composition is skewed to acidic residues over residues 281–290 (SEDEDVESQE) and 311–336 (DEPIEEELASCHSDEDDHQNEVLGDE). Positions 362-372 (DSSVSSSTSST) are enriched in low complexity. Acidic residues predominate over residues 373-388 (PDDDEDDSATSYDSDD). Residues 421-433 (KAEVNANEERMDD) are compositionally biased toward basic and acidic residues. Residues 434 to 443 (VSVSPGRSDS) show a composition bias toward low complexity. In terms of domain architecture, Protein kinase spans 495-1044 (YHVIRKLGWG…ANDALKHPFL (550 aa)). Residues 501–509 (LGWGHFSTV) and lysine 524 each bind ATP. Aspartate 628 serves as the catalytic Proton acceptor. The disordered stretch occupies residues 1066–1121 (QVPEALDGNQEVYRDENDSNSASERSANRSAGSDDEEEFHMDRPGPSGVINEPADV). The segment covering 1084–1096 (SNSASERSANRSA) has biased composition (low complexity).

This sequence belongs to the protein kinase superfamily. Ser/Thr protein kinase family.

It is found in the membrane. It carries out the reaction L-seryl-[protein] + ATP = O-phospho-L-seryl-[protein] + ADP + H(+). The enzyme catalyses L-threonyl-[protein] + ATP = O-phospho-L-threonyl-[protein] + ADP + H(+). Functionally, required for embryogenesis and germline development in both adult hermaphrodites and males. SR-protein kinase (SRPK) that binds directly to and phosphorylates RS domains. The polypeptide is Serine/threonine-protein kinase spk-1 (spk-1) (Caenorhabditis briggsae).